The primary structure comprises 328 residues: Probable voltage-gated potassium channel subunit beta (328 aa).

3 residues coordinate NADP(+): W21, Q27, and D49. The active-site Proton donor/acceptor is the Y54. 14 residues coordinate NADP(+): S152, Q178, W207, S208, P209, L210, A211, K218, R229, G285, T287, Q291, E294, and N295.

The protein belongs to the shaker potassium channel beta subunit family. Forms heteromultimeric complexes with potassium channel alpha subunits. As to expression, expressed in roots, leaves and flowers (at protein level).

Functionally, probable accessory potassium channel protein which modulates the activity of the pore-forming alpha subunit. This is Probable voltage-gated potassium channel subunit beta (KAB1) from Arabidopsis thaliana (Mouse-ear cress).